Reading from the N-terminus, the 234-residue chain is uncharacterized protein (234 aa).

Transmembrane regions (helical) follow at residues 20–40 (LILLITIGVTLIMGFVQFKVI) and 176–196 (VMAFGAAVMGGITLAFFLHFL).

The protein belongs to the CpsC/CapA family.

It localises to the cell membrane. This is an uncharacterized protein from Bacillus subtilis (strain 168).